Here is a 371-residue protein sequence, read N- to C-terminus: Chaperone protein DnaJ (371 aa).

Positions S5 to G70 constitute a J domain. A CR-type zinc finger spans residues G139–R217. Zn(2+) is bound by residues C152, C155, C169, C172, C191, C194, C205, and C208. CXXCXGXG motif repeat units follow at residues C152–G159, C169–G176, C191–G198, and C205–G212.

It belongs to the DnaJ family. As to quaternary structure, homodimer. Requires Zn(2+) as cofactor.

The protein localises to the cytoplasm. Participates actively in the response to hyperosmotic and heat shock by preventing the aggregation of stress-denatured proteins and by disaggregating proteins, also in an autonomous, DnaK-independent fashion. Unfolded proteins bind initially to DnaJ; upon interaction with the DnaJ-bound protein, DnaK hydrolyzes its bound ATP, resulting in the formation of a stable complex. GrpE releases ADP from DnaK; ATP binding to DnaK triggers the release of the substrate protein, thus completing the reaction cycle. Several rounds of ATP-dependent interactions between DnaJ, DnaK and GrpE are required for fully efficient folding. Also involved, together with DnaK and GrpE, in the DNA replication of plasmids through activation of initiation proteins. The polypeptide is Chaperone protein DnaJ (Leptospira borgpetersenii serovar Hardjo-bovis (strain JB197)).